A 79-amino-acid chain; its full sequence is UPF0654 protein C11D3.01c (79 aa).

Residues M1–E79 form a disordered region. Residues E22–K45 show a composition bias toward basic and acidic residues.

It belongs to the UPF0654 (con-6) family.

This is UPF0654 protein C11D3.01c from Schizosaccharomyces pombe (strain 972 / ATCC 24843) (Fission yeast).